The chain runs to 507 residues: Carboxypeptidase sxa2 (507 aa).

Residues 1–22 form the signal peptide; the sequence is MLSLFLKSLFAIIIIELTIIHA. 2 N-linked (GlcNAc...) asparagine glycosylation sites follow: asparagine 38 and asparagine 45. The segment at 41–64 is disordered; that stretch reads SASSNQTVQPRQHAAPSSDRIKSL. The active site involves serine 200. Residues asparagine 259, asparagine 260, and asparagine 300 are each glycosylated (N-linked (GlcNAc...) asparagine). Residue aspartate 434 is part of the active site. N-linked (GlcNAc...) asparagine glycosylation is present at asparagine 448. Residue histidine 487 is part of the active site.

It belongs to the peptidase S10 family.

Its subcellular location is the secreted. Its function is as follows. Involved in degradation or processing of the mating pheromones. Its loss causes a persistent response to the pheromones. It may be required for stabilization of enzymes that are essential for zygote formation. May degrade the mating pheromone P-factor. The protein is Carboxypeptidase sxa2 (sxa2) of Schizosaccharomyces pombe (strain 972 / ATCC 24843) (Fission yeast).